Reading from the N-terminus, the 646-residue chain is MRARLISYNGTTMYDLLKTIDDPADLRRLDRRQLQPLADELRAFVLDSVSKTGGHLSSNLGTVELTIALHYVFNTPNDRIVWDVGHQTYPHKILTGRRDQMHSLRQYDGISGFPRRSESEYDTFGTAHSSTSISAALGMAIGSQLNGDDRFSIAVIGDGAMTAGMAFEAMNNAGVSEDAKLLVILNDNDMSISPPVGALNRHLARLMSGRFYAAARAGVERVLSVAPPVLELARKLEEHAKGMVVPATLFEEFGFNYIGPIDGHDLDSLIPTLQNIRELRGPQFLHVVTKKGQGYKLAEADPVLYHGPGKFNPAEGIKPSTTPAKKTYTQVFGEWLCDEAERDTRVVGITPAMREGSGMVEFEKRFKDRYYDVGIAEQHAVTFAGGLATEGLKPVVAIYSTFLQRAYDQLIHDVALQNLPVVFAIDRAGLVGADGATHAGAYDLAFMRCIPNMTIMAASDENECRQMLHTALQQPNPTAVRYPRGAGTGVATVKEFTEIPLGKGEVRRRTSQPEGKRVAILAFGTMVAPSLAAAEELDATVANMRFVKPVDAALVRELAETHDYLVTVEEGCVMGGAGSACVEALMESGVIRPVLQLGLPDQFVDHGDHAKLLAQCGLDGAGIAKSIRERFLSPAADVAGHAKRVA.

Thiamine diphosphate is bound by residues histidine 86 and 127 to 129 (AHS). Mg(2+) is bound at residue aspartate 158. Thiamine diphosphate is bound by residues 159 to 160 (GA), asparagine 188, tyrosine 295, and glutamate 377. Asparagine 188 contributes to the Mg(2+) binding site.

This sequence belongs to the transketolase family. DXPS subfamily. Homodimer. Requires Mg(2+) as cofactor. Thiamine diphosphate serves as cofactor.

The catalysed reaction is D-glyceraldehyde 3-phosphate + pyruvate + H(+) = 1-deoxy-D-xylulose 5-phosphate + CO2. The protein operates within metabolic intermediate biosynthesis; 1-deoxy-D-xylulose 5-phosphate biosynthesis; 1-deoxy-D-xylulose 5-phosphate from D-glyceraldehyde 3-phosphate and pyruvate: step 1/1. Catalyzes the acyloin condensation reaction between C atoms 2 and 3 of pyruvate and glyceraldehyde 3-phosphate to yield 1-deoxy-D-xylulose-5-phosphate (DXP). This chain is 1-deoxy-D-xylulose-5-phosphate synthase, found in Burkholderia cenocepacia (strain HI2424).